Consider the following 621-residue polypeptide: Chaperone protein DnaK (621 aa).

T175 bears the Phosphothreonine; by autocatalysis mark. Basic and acidic residues predominate over residues 499–516; the sequence is EAHEADDKKRKEDAETRN. Disordered regions lie at residues 499 to 520 and 583 to 621; these read EAHE…NAEN and AQQG…KDNK. Residues 583–602 show a composition bias toward low complexity; sequence AQQGAEGAAGAADSGSANNG. Residues 603–621 show a composition bias toward acidic residues; it reads GDDDVVDAEVVDDDDKDNK.

It belongs to the heat shock protein 70 family.

Functionally, acts as a chaperone. The chain is Chaperone protein DnaK from Bifidobacterium animalis subsp. lactis (strain AD011).